Consider the following 257-residue polypeptide: Phosphonates import ATP-binding protein PhnC (257 aa).

In terms of domain architecture, ABC transporter spans 4 to 248 (IEFKDVRKVY…AFNEIYGRSI (245 aa)). 37 to 44 (GLSGSGKS) lines the ATP pocket.

The protein belongs to the ABC transporter superfamily. Phosphonates importer (TC 3.A.1.9.1) family. As to quaternary structure, the complex is composed of two ATP-binding proteins (PhnC), two transmembrane proteins (PhnE) and a solute-binding protein (PhnD).

It localises to the cell membrane. It catalyses the reaction phosphonate(out) + ATP + H2O = phosphonate(in) + ADP + phosphate + H(+). Part of the ABC transporter complex PhnCDE involved in phosphonates import. Responsible for energy coupling to the transport system. The sequence is that of Phosphonates import ATP-binding protein PhnC from Staphylococcus saprophyticus subsp. saprophyticus (strain ATCC 15305 / DSM 20229 / NCIMB 8711 / NCTC 7292 / S-41).